We begin with the raw amino-acid sequence, 318 residues long: Retinol dehydrogenase 5 (318 aa).

Residues 1-21 (MWLPLLLGALLWAVLWLLRDR) form a helical membrane-spanning segment. The Lumenal portion of the chain corresponds to 22–288 (QSLPASNAFV…TRYSPGWDAK (267 aa)). NADP(+) is bound at residue 32-56 (FITGCDSGFGRLLALQLDQRGFRVL). N160 carries N-linked (GlcNAc...) asparagine glycosylation. Residue S163 participates in substrate binding. The active-site Proton acceptor is the Y175. The chain crosses the membrane as a helical span at residues 289 to 309 (LLWLPASYLPASLVDAVLTWV). The Cytoplasmic portion of the chain corresponds to 310–318 (LPKPAQAVY).

This sequence belongs to the short-chain dehydrogenases/reductases (SDR) family. Homodimer. As to expression, widely expressed. In the eye, abundant in the retinal pigment epithelium.

Its subcellular location is the endoplasmic reticulum membrane. It catalyses the reaction 11-cis-retinol + NAD(+) = 11-cis-retinal + NADH + H(+). The catalysed reaction is 9-cis-retinol + NAD(+) = 9-cis-retinal + NADH + H(+). The enzyme catalyses 13-cis-retinol + NAD(+) = 13-cis-retinal + NADH + H(+). It carries out the reaction androsterone + NAD(+) = 5alpha-androstan-3,17-dione + NADH + H(+). It catalyses the reaction 5alpha-androstane-3alpha,17beta-diol + NAD(+) = 17beta-hydroxy-5alpha-androstan-3-one + NADH + H(+). It functions in the pathway cofactor metabolism; retinol metabolism. Inhibited by 9-cis-, 13-cis- and all-trans-retinoic acids, with the most potent inhibitor being 13-cis-retinoic acid. Weakly inhibited by oleic acid. In terms of biological role, catalyzes the oxidation of cis-isomers of retinol, including 11-cis-, 9-cis-, and 13-cis-retinol in an NAD-dependent manner. Has no activity towards all-trans retinal. Plays a significant role in 11-cis retinol oxidation in the retinal pigment epithelium cells (RPE). Also recognizes steroids (androsterone, androstanediol) as its substrates. This Homo sapiens (Human) protein is Retinol dehydrogenase 5.